A 499-amino-acid chain; its full sequence is Fumarate hydratase 2 (499 aa).

Residues 19–51 are disordered; sequence ADVTLKQEDEQQERRSYSTPFREERDTFGPIQV. The segment covering 23–45 has biased composition (basic and acidic residues); it reads LKQEDEQQERRSYSTPFREERDT. Substrate contacts are provided by residues 134-136, 164-167, 174-176, and threonine 222; these read SGT, HPND, and SSN. The active-site Proton donor/acceptor is histidine 223. Serine 353 is a catalytic residue. Substrate contacts are provided by residues serine 354 and 359–361; that span reads KVN.

The protein belongs to the class-II fumarase/aspartase family. Fumarase subfamily. As to quaternary structure, homotetramer.

The protein localises to the cytoplasm. Its subcellular location is the cytosol. The enzyme catalyses (S)-malate = fumarate + H2O. With respect to regulation, fumarate hydratase activity (fumarate to L-malate) is strongly inhibited by phosphoenolpyruvate, citrate, oxaloacetate, ATP and ADP. Malate dehydratase activity (malate to fumarate) is activated by oxaloacetate, Asn and Gln. Malate dehydratase activity (malate to fumarate) is inhibited by citrate, succinate, ADP and ATP. Its function is as follows. Cytosolic fumarate hydratase that catalyzes the reversible stereospecific interconversion of fumarate to L-malate. Catalyzes the dehydration of L-malate to fumarate in the cytosol: required for the massive fumarate accumulation during the day in plants grown under high nitrogen. Also required for acclimation of photosynthesis to cold: acts by mediating accumulation of fumarate at low temperature, leading to reduce accumulation of phosphorylated sugars. The chain is Fumarate hydratase 2 from Arabidopsis thaliana (Mouse-ear cress).